Reading from the N-terminus, the 441-residue chain is Ribosomal protein uS12 methylthiotransferase RimO (441 aa).

The MTTase N-terminal domain maps to P7–P117. Residues C16, C52, C81, C148, C152, and C155 each contribute to the [4Fe-4S] cluster site. A Radical SAM core domain is found at L134 to R371. Residues K374–G440 enclose the TRAM domain.

It belongs to the methylthiotransferase family. RimO subfamily. The cofactor is [4Fe-4S] cluster.

The protein localises to the cytoplasm. It catalyses the reaction L-aspartate(89)-[ribosomal protein uS12]-hydrogen + (sulfur carrier)-SH + AH2 + 2 S-adenosyl-L-methionine = 3-methylsulfanyl-L-aspartate(89)-[ribosomal protein uS12]-hydrogen + (sulfur carrier)-H + 5'-deoxyadenosine + L-methionine + A + S-adenosyl-L-homocysteine + 2 H(+). In terms of biological role, catalyzes the methylthiolation of an aspartic acid residue of ribosomal protein uS12. The polypeptide is Ribosomal protein uS12 methylthiotransferase RimO (Rhodopseudomonas palustris (strain BisB18)).